The sequence spans 555 residues: Glutamine--tRNA ligase (555 aa).

The 'HIGH' region signature appears at 34–44 (PEPNGFLHIGH). ATP contacts are provided by residues 35–37 (EPN) and 41–47 (HIGHAKS). Positions 67 and 212 each coordinate L-glutamine. ATP-binding positions include Thr231, 261 to 262 (RL), and 269 to 271 (LSK). A 'KMSKS' region motif is present at residues 268–272 (VLSKR).

It belongs to the class-I aminoacyl-tRNA synthetase family. As to quaternary structure, monomer.

It is found in the cytoplasm. The catalysed reaction is tRNA(Gln) + L-glutamine + ATP = L-glutaminyl-tRNA(Gln) + AMP + diphosphate. This chain is Glutamine--tRNA ligase, found in Alteromonas mediterranea (strain DSM 17117 / CIP 110805 / LMG 28347 / Deep ecotype).